Reading from the N-terminus, the 501-residue chain is Endosomal/lysosomal proton channel TMEM175 (501 aa).

The interval 1–20 is disordered; the sequence is MAAPRAATPGPGGGARKPEL. The Cytoplasmic portion of the chain corresponds to 1–31; the sequence is MAAPRAATPGPGGGARKPELDLELGSSTQTS. A helical transmembrane segment spans residues 32 to 54; it reads HRLLAYSDALLSIIATVMILPVA. A RxxxFSD motif 1 motif is present at residues 33-39; that stretch reads RLLAYSD. Residues 55 to 75 are Lumenal-facing; it reads HTKIHPDQKLGESVQQLLLTK. Residues 56–61 are short helix H1-1; the sequence is TKIHPD. Positions 63 to 69 are short helix H2-1; sequence KLGESVQ. A helical membrane pass occupies residues 76–98; it reads IAVYLMTFLIVTVAWAAHVRLFQ. At 99 to 104 the chain is on the cytoplasmic side; the sequence is VIELID. A helical membrane pass occupies residues 105–126; sequence DVLALLNLACMMIITFLPYTFS. Residues 127–136 are Lumenal-facing; that stretch reads LMASFPGVPF. The helical transmembrane segment at 137–158 threads the bilayer; it reads GIFLFSVCAVVIGLIQAVIVVY. The Cytoplasmic portion of the chain corresponds to 159–182; it reads GFYHPHLLNQQIQVSENQNFYKRH. The helical transmembrane segment at 183–203 threads the bilayer; that stretch reads ILKIILRGPALCFLAAIFSFF. The Lumenal portion of the chain corresponds to 204–208; that stretch reads FIPLS. Residues 209 to 228 form a helical membrane-spanning segment; it reads YLLLGLVIVFPHLSRFITWC. The Cytoplasmic segment spans residues 229–257; it reads KTKIVGHRDEEEASYSLETFSFYLSEPLS. The helical transmembrane segment at 258–282 threads the bilayer; sequence KERVEAFSDGVYAIVATLLILDICE. Positions 260 to 266 match the RxxxFSD motif 2 motif; the sequence is RVEAFSD. The Lumenal portion of the chain corresponds to 283–309; the sequence is DNVPDPREVGEKFHGSLLEALSEYGPN. Residues 288 to 296 form a short helix H1-2 region; it reads PREVGEKFH. The interval 298–304 is short helix H2-2; that stretch reads SLLEALS. Residues 310–332 traverse the membrane as a helical segment; it reads YLAYFGSFVTIGLLWFVHHSLFL. Topologically, residues 333 to 338 are cytoplasmic; the sequence is YVTKAT. Residues 339 to 360 form a helical membrane-spanning segment; sequence RLMGLLNILSLAFIGGLPLAYQ. At 361–375 the chain is on the lumenal side; that stretch reads LTSEFAEKSHNEIEA. Residues 376–396 form a helical membrane-spanning segment; sequence IQVSCVITFFASIFQFAIWTT. Topologically, residues 397–416 are cytoplasmic; the sequence is ALLHERETLHPFARYGGKEH. A helical transmembrane segment spans residues 417 to 440; sequence AFMFAKLALYPCVSLGAFFLTCLL. Residues 441–442 are Lumenal-facing; it reads SE. A helical membrane pass occupies residues 443 to 469; that stretch reads FSTEIFHLMQIVIPFAFLALRIFVRIS. Over 470 to 501 the chain is Cytoplasmic; sequence LTVIKSVMSLSRRKVVLLEEEEACLSPTETHS.

This sequence belongs to the TMEM175 family. As to quaternary structure, homodimer.

The protein localises to the endosome membrane. It localises to the lysosome membrane. The catalysed reaction is H(+)(in) = H(+)(out). The enzyme catalyses K(+)(in) = K(+)(out). With respect to regulation, active at low pH (under pH 4.6): proton channel activity is activated by luminal side protons. Polyunsaturated fatty acids, such as arachidonic acid, also activate the channel activity. Functionally, proton-activated proton channel that catalyzes proton efflux from endosomes and lysosomes to maintain a steady-state pH. Activated at low pH (under pH 4.6) by luminal side protons: selectively mediates lysosomal proton release from lysosomes, eliciting a proton leak that balances V-ATPase activity to maintain pH homeostasis. Regulation of lumenal pH stability is required for autophagosome-lysosome fusion. Also acts as a potassium channel at higher pH, regulating potassium conductance in endosomes and lysosomes. The sequence is that of Endosomal/lysosomal proton channel TMEM175 from Gallus gallus (Chicken).